The primary structure comprises 164 residues: Lectin (164 aa).

Residues threonine 1–alanine 15 form the signal peptide. The region spanning arginine 16–lysine 125 is the Bulb-type lectin domain. A disulfide bridge connects residues cysteine 44 and cysteine 68.

Homotetramer. Not glycosylated.

In terms of biological role, mannose-specific lectin. Induces a Th1-type immune response in vitro. Causes a 4-fold increase in the proliferation of murine thymocytes and a significant increase in the production of nitric oxide at 24 hours in a macrophage cell line. Stimulates the production of the pro-inflammatory cytokines TNF and IL12 by rat peritoneal macrophages in a dose-dependent manner and of the cytokines IFNG and IL2 in murine thymocytes. Has hemagglutination activity towards rabbit erythrocytes. This Allium cepa (Onion) protein is Lectin.